Here is a 486-residue protein sequence, read N- to C-terminus: NGFI-A-binding protein 1 (486 aa).

The segment at 4 to 82 is NCD1; sequence ALPRTLGELQ…RDWVTNPGLF (79 aa). Residues K126, K129, and K143 each participate in a glycyl lysine isopeptide (Lys-Gly) (interchain with G-Cter in SUMO2) cross-link. The segment at 160 to 187 is disordered; the sequence is WQGHHATESEHSLSPADLGSPASPKESS. Phosphoserine occurs at positions 171 and 182. K211 participates in a covalent cross-link: Glycyl lysine isopeptide (Lys-Gly) (interchain with G-Cter in SUMO2). The NCD2 stretch occupies residues 220–309; sequence LLKNNKKLAK…ARQVSREVTY (90 aa). Residues 306-337 form a necessary for nuclear localization region; that stretch reads EVTYKYTYRTTRLKCGERDELSPKRIKIEDGF. S327 carries the phosphoserine modification. K332 is covalently cross-linked (Glycyl lysine isopeptide (Lys-Gly) (interchain with G-Cter in SUMO1); alternate). K332 is covalently cross-linked (Glycyl lysine isopeptide (Lys-Gly) (interchain with G-Cter in SUMO2); alternate). Glycyl lysine isopeptide (Lys-Gly) (interchain with G-Cter in SUMO2) cross-links involve residues K354, K368, and K372. The tract at residues 398-438 is disordered; sequence RQSSGEQSPDGGLPSDSSDGQGERPLNLRIPSVQNRQPHHF. Over residues 404–417 the composition is skewed to low complexity; it reads QSPDGGLPSDSSDG. A Phosphoserine modification is found at S405. Glycyl lysine isopeptide (Lys-Gly) (interchain with G-Cter in SUMO2) cross-links involve residues K453, K464, and K476. A Glycyl lysine isopeptide (Lys-Gly) (interchain with G-Cter in SUMO1); alternate cross-link involves residue K479. Residue K479 forms a Glycyl lysine isopeptide (Lys-Gly) (interchain with G-Cter in SUMO2); alternate linkage.

The protein belongs to the NAB family. Homomultimers may associate with EGR1 bound to DNA. Widely expressed in adult. In day 16 embryo highest levels in forebrain, thymus, salivary gland and cartilage.

Its subcellular location is the nucleus. Its function is as follows. Acts as a transcriptional repressor for zinc finger transcription factors EGR1 and EGR2. This is NGFI-A-binding protein 1 (Nab1) from Mus musculus (Mouse).